A 227-amino-acid chain; its full sequence is MAYPFQLGLQDATSPIMEELTNFHDHTLMIVFLISSLVLYIISLMLTTKLTHTSTMDAQEVETIWTILPAAILVLIALPSLRILYMMDEINNPALTVKTMGHQWYWSYEYTDYEDLCFDSYMTPTNELKPGELRLLEVDNRIVLPMELPIRMLISSEDVLHSWAVPSLGLKTDAIPGRLNQATVTSNRPGLFYGQCSEICGSNHSFMPIVLEMVPLKYFENWSASMI.

Residues 1–14 (MAYPFQLGLQDATS) are Mitochondrial intermembrane-facing. A helical transmembrane segment spans residues 15–45 (PIMEELTNFHDHTLMIVFLISSLVLYIISLM). At 46–59 (LTTKLTHTSTMDAQ) the chain is on the mitochondrial matrix side. The chain crosses the membrane as a helical span at residues 60 to 87 (EVETIWTILPAAILVLIALPSLRILYMM). Topologically, residues 88–227 (DEINNPALTV…YFENWSASMI (140 aa)) are mitochondrial intermembrane. Cu cation is bound by residues H161, C196, E198, C200, H204, and M207. Residue E198 coordinates Mg(2+). Y218 bears the Phosphotyrosine mark.

It belongs to the cytochrome c oxidase subunit 2 family. In terms of assembly, component of the cytochrome c oxidase (complex IV, CIV), a multisubunit enzyme composed of 14 subunits. The complex is composed of a catalytic core of 3 subunits MT-CO1, MT-CO2 and MT-CO3, encoded in the mitochondrial DNA, and 11 supernumerary subunits COX4I, COX5A, COX5B, COX6A, COX6B, COX6C, COX7A, COX7B, COX7C, COX8 and NDUFA4, which are encoded in the nuclear genome. The complex exists as a monomer or a dimer and forms supercomplexes (SCs) in the inner mitochondrial membrane with NADH-ubiquinone oxidoreductase (complex I, CI) and ubiquinol-cytochrome c oxidoreductase (cytochrome b-c1 complex, complex III, CIII), resulting in different assemblies (supercomplex SCI(1)III(2)IV(1) and megacomplex MCI(2)III(2)IV(2)). Found in a complex with TMEM177, COA6, COX18, COX20, SCO1 and SCO2. Interacts with TMEM177 in a COX20-dependent manner. Interacts with COX20. Interacts with COX16. It depends on Cu cation as a cofactor.

It localises to the mitochondrion inner membrane. The catalysed reaction is 4 Fe(II)-[cytochrome c] + O2 + 8 H(+)(in) = 4 Fe(III)-[cytochrome c] + 2 H2O + 4 H(+)(out). Component of the cytochrome c oxidase, the last enzyme in the mitochondrial electron transport chain which drives oxidative phosphorylation. The respiratory chain contains 3 multisubunit complexes succinate dehydrogenase (complex II, CII), ubiquinol-cytochrome c oxidoreductase (cytochrome b-c1 complex, complex III, CIII) and cytochrome c oxidase (complex IV, CIV), that cooperate to transfer electrons derived from NADH and succinate to molecular oxygen, creating an electrochemical gradient over the inner membrane that drives transmembrane transport and the ATP synthase. Cytochrome c oxidase is the component of the respiratory chain that catalyzes the reduction of oxygen to water. Electrons originating from reduced cytochrome c in the intermembrane space (IMS) are transferred via the dinuclear copper A center (CU(A)) of subunit 2 and heme A of subunit 1 to the active site in subunit 1, a binuclear center (BNC) formed by heme A3 and copper B (CU(B)). The BNC reduces molecular oxygen to 2 water molecules using 4 electrons from cytochrome c in the IMS and 4 protons from the mitochondrial matrix. The protein is Cytochrome c oxidase subunit 2 (MT-CO2) of Rhabdomys pumilio (Four-striped grass mouse).